Consider the following 138-residue polypeptide: 1,4-dihydroxy-2-naphthoyl-CoA hydrolase (138 aa).

Aspartate 13 is an active-site residue.

This sequence belongs to the 4-hydroxybenzoyl-CoA thioesterase family. DHNA-CoA hydrolase subfamily.

It carries out the reaction 1,4-dihydroxy-2-naphthoyl-CoA + H2O = 1,4-dihydroxy-2-naphthoate + CoA + H(+). The protein operates within cofactor biosynthesis; phylloquinone biosynthesis. It participates in quinol/quinone metabolism; 1,4-dihydroxy-2-naphthoate biosynthesis; 1,4-dihydroxy-2-naphthoate from chorismate: step 7/7. Functionally, catalyzes the hydrolysis of 1,4-dihydroxy-2-naphthoyl-CoA (DHNA-CoA) to 1,4-dihydroxy-2-naphthoate (DHNA), a reaction involved in phylloquinone (vitamin K1) biosynthesis. In Microcystis aeruginosa (strain NIES-843 / IAM M-2473), this protein is 1,4-dihydroxy-2-naphthoyl-CoA hydrolase.